The following is a 144-amino-acid chain: Giant hemoglobins B chain (144 aa).

In terms of domain architecture, Globin spans 3 to 144 (VCGPLQRLKV…LNVITNGIQG (142 aa)). His-96 contacts heme b.

It belongs to the globin family. In terms of assembly, part of giant hemoglobin C1, V1 and V2. This worm has three different extracellular Hbs: two dissolved in the vascular blood, V1 (CA. 3,500 kDa) and V2 (CA. 400 kDa), and one in the coelomic fluid, C1 (CA. 400 kDa). V1 consists of four heme-containing, globin chains (B-E) and four linker chains (L1-L4). V2 consists of six globin chains (A-F) and C1 consists of five globin chains (A-E).

The protein localises to the secreted. It localises to the extracellular space. In Riftia pachyptila (Vent tube worm), this protein is Giant hemoglobins B chain.